The sequence spans 230 residues: Phosphoglycerate mutase-like protein 4 (230 aa).

His-21 (tele-phosphohistidine intermediate) is an active-site residue. Glu-96 acts as the Proton donor/acceptor in catalysis.

This sequence belongs to the phosphoglycerate mutase family.

May play a role in carbohydrates metabolism. In Arabidopsis thaliana (Mouse-ear cress), this protein is Phosphoglycerate mutase-like protein 4.